The chain runs to 948 residues: Translation initiation factor IF-2 (948 aa).

Disordered regions lie at residues 61–120 (IQAN…PALI), 162–243 (KSRE…TQSA), and 255–285 (QEKDKQEAKKAKKPSKPKATPTAKNNKSHKI). Positions 68 to 78 (KNPEQDNKDDL) are enriched in basic and acidic residues. A compositionally biased stretch (low complexity) spans 173–189 (SNTNNANSTNNANNVNN). The span at 190 to 207 (AKKEISEVKKQEQEIKRH) shows a compositional bias: basic and acidic residues. Basic residues predominate over residues 208 to 219 (ENIKRRTGFRVI). Polar residues predominate over residues 230-243 (ENSVAESKKPTQSA). In terms of domain architecture, tr-type G spans 447–616 (ERPPVVTIMG…LIQADIMELK (170 aa)). Residues 456 to 463 (GHVDHGKT) are G1. A GTP-binding site is contributed by 456–463 (GHVDHGKT). A G2 region spans residues 481-485 (GITQH). The segment at 502–505 (DTPG) is G3. Residues 502–506 (DTPGH) and 556–559 (NKMD) each bind GTP. Residues 556–559 (NKMD) are G4. The G5 stretch occupies residues 592 to 594 (SAK).

The protein belongs to the TRAFAC class translation factor GTPase superfamily. Classic translation factor GTPase family. IF-2 subfamily.

Its subcellular location is the cytoplasm. One of the essential components for the initiation of protein synthesis. Protects formylmethionyl-tRNA from spontaneous hydrolysis and promotes its binding to the 30S ribosomal subunits. Also involved in the hydrolysis of GTP during the formation of the 70S ribosomal complex. This is Translation initiation factor IF-2 from Helicobacter pylori (strain Shi470).